The chain runs to 330 residues: Cytosolic iron-sulfur protein assembly protein 1 (330 aa).

WD repeat units lie at residues 12–53, 56–95, 105–144, 151–190, 195–236, 248–286, and 292–330; these read LYKE…DVLD, AHKKAIRSVAWRPHTSLLAAGSFDSTVSIWAKEESADRTF, GHENEVKGVAWSNDGYYLATCSRDKSVWIWETDESGEEYE, EHSQDVKHVIWHPSEALLASSSYDDTVRIWKDYDDDWECV, GHEG…EDDQ, VHKRQVYNVAWGFNGLIASVGADGVLAVYEEVDGEWKVF, and CHGVYEINVVKWLELNGKTILATGGDDGIVNFWSLEKAA.

Belongs to the WD repeat CIA1 family. As to quaternary structure, interacts with NAR1.

The protein localises to the cytoplasm. The protein resides in the nucleus. Functionally, essential component of the cytosolic iron-sulfur (Fe/S) protein assembly machinery. Required for the maturation of extramitochondrial Fe/S proteins. This chain is Cytosolic iron-sulfur protein assembly protein 1, found in Saccharomyces cerevisiae (strain ATCC 204508 / S288c) (Baker's yeast).